A 367-amino-acid polypeptide reads, in one-letter code: 3-isopropylmalate dehydrogenase (367 aa).

Residue 77–90 (GPKYDDLDFSVKPE) coordinates NAD(+). Residues Arg-97, Arg-107, Arg-135, and Asp-224 each coordinate substrate. Asp-224, Asp-248, and Asp-252 together coordinate Mg(2+). Position 287 to 299 (287 to 299 (GSAPDIAGQGKAN)) interacts with NAD(+).

It belongs to the isocitrate and isopropylmalate dehydrogenases family. LeuB type 1 subfamily. In terms of assembly, homodimer. It depends on Mg(2+) as a cofactor. Requires Mn(2+) as cofactor.

The protein resides in the cytoplasm. It carries out the reaction (2R,3S)-3-isopropylmalate + NAD(+) = 4-methyl-2-oxopentanoate + CO2 + NADH. It participates in amino-acid biosynthesis; L-leucine biosynthesis; L-leucine from 3-methyl-2-oxobutanoate: step 3/4. Catalyzes the oxidation of 3-carboxy-2-hydroxy-4-methylpentanoate (3-isopropylmalate) to 3-carboxy-4-methyl-2-oxopentanoate. The product decarboxylates to 4-methyl-2 oxopentanoate. The chain is 3-isopropylmalate dehydrogenase from Ruegeria pomeroyi (strain ATCC 700808 / DSM 15171 / DSS-3) (Silicibacter pomeroyi).